Here is a 954-residue protein sequence, read N- to C-terminus: Glycine dehydrogenase (decarboxylating) (954 aa).

Lysine 704 is subject to N6-(pyridoxal phosphate)lysine.

This sequence belongs to the GcvP family. As to quaternary structure, the glycine cleavage system is composed of four proteins: P, T, L and H. Pyridoxal 5'-phosphate is required as a cofactor.

The catalysed reaction is N(6)-[(R)-lipoyl]-L-lysyl-[glycine-cleavage complex H protein] + glycine + H(+) = N(6)-[(R)-S(8)-aminomethyldihydrolipoyl]-L-lysyl-[glycine-cleavage complex H protein] + CO2. The glycine cleavage system catalyzes the degradation of glycine. The P protein binds the alpha-amino group of glycine through its pyridoxal phosphate cofactor; CO(2) is released and the remaining methylamine moiety is then transferred to the lipoamide cofactor of the H protein. The polypeptide is Glycine dehydrogenase (decarboxylating) (Allorhizobium ampelinum (strain ATCC BAA-846 / DSM 112012 / S4) (Agrobacterium vitis (strain S4))).